A 484-amino-acid polypeptide reads, in one-letter code: Glutamate--tRNA ligase (484 aa).

Positions 10-20 (PSPTGYLHVGG) match the 'HIGH' region motif. The 'KMSKS' region motif lies at 252 to 256 (KLSKR). Lys255 is a binding site for ATP.

It belongs to the class-I aminoacyl-tRNA synthetase family. Glutamate--tRNA ligase type 1 subfamily. In terms of assembly, monomer.

The protein resides in the cytoplasm. It catalyses the reaction tRNA(Glu) + L-glutamate + ATP = L-glutamyl-tRNA(Glu) + AMP + diphosphate. Catalyzes the attachment of glutamate to tRNA(Glu) in a two-step reaction: glutamate is first activated by ATP to form Glu-AMP and then transferred to the acceptor end of tRNA(Glu). The polypeptide is Glutamate--tRNA ligase (Mycoplasma genitalium (strain ATCC 33530 / DSM 19775 / NCTC 10195 / G37) (Mycoplasmoides genitalium)).